We begin with the raw amino-acid sequence, 314 residues long: Homoserine O-acetyltransferase (314 aa).

Cys-142 functions as the Acyl-thioester intermediate in the catalytic mechanism. The substrate site is built by Lys-163 and Ser-192. The active-site Proton acceptor is the His-235. Glu-237 is an active-site residue. Position 249 (Arg-249) interacts with substrate.

It belongs to the MetA family.

Its subcellular location is the cytoplasm. It carries out the reaction L-homoserine + acetyl-CoA = O-acetyl-L-homoserine + CoA. The protein operates within amino-acid biosynthesis; L-methionine biosynthesis via de novo pathway; O-acetyl-L-homoserine from L-homoserine: step 1/1. In terms of biological role, transfers an acetyl group from acetyl-CoA to L-homoserine, forming acetyl-L-homoserine. This Streptococcus pneumoniae serotype 19F (strain G54) protein is Homoserine O-acetyltransferase.